The primary structure comprises 407 residues: Negative RAS protein regulator protein (407 aa).

Disordered regions lie at residues 51–94 (PRII…ARQI), 165–187 (HPSK…NLNF), and 241–273 (NNNN…NVFS). The span at 55 to 73 (SSSNSNSNSNSNSNSNSNS) shows a compositional bias: low complexity. One can recognise a Myb-like domain in the interval 90–158 (SARQIRKKWK…QCHDRFKVLY (69 aa)). Over residues 165 to 177 (HPSKKSKQKKKKS) the composition is skewed to basic residues. Over residues 241-270 (NNNNNNINNSNNSNNNNSNNINRNSNHSTN) the composition is skewed to low complexity.

Its subcellular location is the nucleus. In terms of biological role, negative regulator of the Ras-cyclic AMP pathway. Negatively regulate the activity of normal but not mutationally activated Ras proteins. The down-regulatory effect of RPI1 requires the presence of one of the two Ras GTPase activators, IRA1 and IRA2. The protein is Negative RAS protein regulator protein (RPI1) of Saccharomyces cerevisiae (strain ATCC 204508 / S288c) (Baker's yeast).